Consider the following 86-residue polypeptide: MKTLLLSLVVVTIVCLDLGYTLTCLICPEKYCNKVHTCLNGEKICFKKYDQRKLLGKRYIRGCADTCPVRKPREIVECCSTDKCNH.

The first 21 residues, 1 to 21 (MKTLLLSLVVVTIVCLDLGYT), serve as a signal peptide directing secretion. Disulfide bonds link cysteine 24–cysteine 45, cysteine 27–cysteine 32, cysteine 38–cysteine 63, cysteine 67–cysteine 78, and cysteine 79–cysteine 84.

The protein belongs to the three-finger toxin family. Ancestral subfamily. Orphan group II sub-subfamily. In terms of tissue distribution, expressed by the venom gland.

It localises to the secreted. In terms of biological role, binds with low affinity to muscular (alpha-1-beta-1-delta-epsilon/CHRNA1-CHRNB1-CHRND-CHRNE) and very low affinity to neuronal (alpha-7/CHRNA7) nicotinic acetylcholine receptor (nAChR). In Naja atra (Chinese cobra), this protein is Probable weak neurotoxin NNAM1.